The sequence spans 868 residues: Homeobox-leucine zipper protein HOX29 (868 aa).

The homeobox DNA-binding region spans Asp9 to Lys72. The stretch at Arg64–Val106 forms a coiled coil. The tract at residues Val150 to Ala171 is disordered. Positions Arg169–Ile397 constitute an START domain.

The protein belongs to the HD-ZIP homeobox family. Class III subfamily. Expressed in phloem.

Its subcellular location is the nucleus. In terms of biological role, probable transcription factor that may be necessary for the proper patterning of vascular bundles. The sequence is that of Homeobox-leucine zipper protein HOX29 (HOX29) from Oryza sativa subsp. japonica (Rice).